The sequence spans 217 residues: Peptide methionine sulfoxide reductase MsrA (217 aa).

Residue Cys56 is part of the active site.

It belongs to the MsrA Met sulfoxide reductase family.

It carries out the reaction L-methionyl-[protein] + [thioredoxin]-disulfide + H2O = L-methionyl-(S)-S-oxide-[protein] + [thioredoxin]-dithiol. The enzyme catalyses [thioredoxin]-disulfide + L-methionine + H2O = L-methionine (S)-S-oxide + [thioredoxin]-dithiol. Has an important function as a repair enzyme for proteins that have been inactivated by oxidation. Catalyzes the reversible oxidation-reduction of methionine sulfoxide in proteins to methionine. This is Peptide methionine sulfoxide reductase MsrA from Corynebacterium glutamicum (strain R).